The chain runs to 222 residues: MEGLLQFLLAKIILLALASSFVYCYDPSPLQDYCVATNETNGVYVNGEFCKDPKRVTTNDFYTSGLNVPGNTIIGPGARNTVVDVERLPGLNTLGVDIARYDFAPGGLDPPHTHPRGSQIFLVMKGKLFVGFVSSNEYNYTLFTKVLYPGDVFVFPKGLIHFHANIGETNAVVISAGGSQDPGRIIIGDAVFGSKPLIDPKVLAKAFALDYNKVKYLQAVFS.

Positions 1–24 (MEGLLQFLLAKIILLALASSFVYC) are cleaved as a signal peptide. A disulfide bridge links cysteine 34 with cysteine 50. Asparagine 38 carries N-linked (GlcNAc...) asparagine glycosylation. Positions 64–215 (SGLNVPGNTI…AFALDYNKVK (152 aa)) constitute a Cupin type-1 domain. Mn(2+) contacts are provided by histidine 112 and histidine 114. Asparagine 139 carries an N-linked (GlcNAc...) asparagine glycan. Histidine 161 lines the Mn(2+) pocket.

Belongs to the germin family. Oligomer (believed to be a pentamer but probably hexamer).

Its subcellular location is the secreted. The protein resides in the extracellular space. The protein localises to the apoplast. Functionally, may play a role in plant defense. Probably has no oxalate oxidase activity even if the active site is conserved. This Arabidopsis thaliana (Mouse-ear cress) protein is Germin-like protein subfamily 1 member 4.